The sequence spans 251 residues: Triosephosphate isomerase (251 aa).

10–12 (NWK) is a binding site for substrate. The Electrophile role is filled by H99. The Proton acceptor role is filled by E167. Residues G173, S211, and 232–233 (GG) each bind substrate.

The protein belongs to the triosephosphate isomerase family. As to quaternary structure, homodimer.

The protein resides in the cytoplasm. It carries out the reaction D-glyceraldehyde 3-phosphate = dihydroxyacetone phosphate. It participates in carbohydrate biosynthesis; gluconeogenesis. It functions in the pathway carbohydrate degradation; glycolysis; D-glyceraldehyde 3-phosphate from glycerone phosphate: step 1/1. In terms of biological role, involved in the gluconeogenesis. Catalyzes stereospecifically the conversion of dihydroxyacetone phosphate (DHAP) to D-glyceraldehyde-3-phosphate (G3P). This Neisseria meningitidis serogroup A / serotype 4A (strain DSM 15465 / Z2491) protein is Triosephosphate isomerase.